Consider the following 279-residue polypeptide: UPF0276 protein SO_2008 (279 aa).

The protein belongs to the UPF0276 family.

The polypeptide is UPF0276 protein SO_2008 (Shewanella oneidensis (strain ATCC 700550 / JCM 31522 / CIP 106686 / LMG 19005 / NCIMB 14063 / MR-1)).